A 163-amino-acid chain; its full sequence is MALNLQDKQAIVAEVNEAAKGALSAVIADSRGVTVEKMTELRKSAREAGVTMRVVRNTLLRRAVEGTDYECLKDTFVGPTLIAFSNEHPGAAARLFKEFAKANDKFEIKGAAFEGKIQDVEFLATLPTYEEAIARLMGTMKEAAAGKLARTFAALRDKLQEAA.

Belongs to the universal ribosomal protein uL10 family. In terms of assembly, part of the ribosomal stalk of the 50S ribosomal subunit. The N-terminus interacts with L11 and the large rRNA to form the base of the stalk. The C-terminus forms an elongated spine to which L12 dimers bind in a sequential fashion forming a multimeric L10(L12)X complex.

Forms part of the ribosomal stalk, playing a central role in the interaction of the ribosome with GTP-bound translation factors. The polypeptide is Large ribosomal subunit protein uL10 (Haemophilus influenzae (strain PittEE)).